We begin with the raw amino-acid sequence, 645 residues long: MGDRRPQDRPRSQGMDSKPWYCDKPPSKYFAKRKHRRLRFPPVDTQNWVFVTEGMDDFRYACQSPEDTLVCRRDEFLLPKISLRGPQADRKSRKKKLLKKAALFSELSPVQPARKAFVEEVEAQLMTKHPLAMYPNLGKDMPPDLLLQVLKQLDPERKLEDAWARCEAREKTTEVPTESGKYPCGESCPRPPETPVSRLRPQLPKTPVSSRRPEPPKTRVSSLRPEPPKTRVSSLHPEPPETRASHLRVDPPETGVSHLCPEPPKTLVSSVHPEPPDTGASHLCPEPPETRVSHLHPEPPETGVSHLRPEPSKTQVSSLCPEPPEAGVSHLCLEPPNTHRVSSFLLQVLKLDSEKKLEDARARCEGQEMTTEELTKPGKYHFWESCPRPFESRMPHLRLVLPITRRMASLCLKPPKTRRVSSLCPEPTKTGASHLKELFQEDTPSTMECVSDSLQRRHTSRKLRDFKWAGDLGVNEESISSLFDFTPECRTTDQDQKIKKANECASRLMYGMELDDMDEVEFLRIKYWDRRRRAAPHSYSAQRGRIRYGPWYFEPKLGKKLRSDEPLIDPKPVLEKPDEPDILDGLYGPIAFKDFILSKGYRMPGVIEKLFAKKGWTYDSVKTPIQRAVQVYKYKEDVTDASKED.

Composition is skewed to basic and acidic residues over residues 1–11 (MGDRRPQDRPR), 238–251 (EPPE…RVDP), and 288–299 (PETRVSHLHPEP). Disordered stretches follow at residues 1–23 (MGDR…WYCD) and 168–321 (AREK…SLCP).

It belongs to the FAM47 family.

This Homo sapiens (Human) protein is Protein FAM47B (FAM47B).